A 488-amino-acid chain; its full sequence is Ribulose bisphosphate carboxylase large chain (488 aa).

Residues asparagine 127 and threonine 177 each coordinate substrate. The active-site Proton acceptor is the lysine 179. Position 181 (lysine 181) interacts with substrate. Mg(2+) is bound by residues lysine 205, aspartate 207, and glutamate 208. Lysine 205 carries the post-translational modification N6-carboxylysine. Histidine 297 (proton acceptor) is an active-site residue. Residues arginine 298, histidine 330, and serine 382 each contribute to the substrate site.

The protein belongs to the RuBisCO large chain family. Type I subfamily. In terms of assembly, heterohexadecamer of 8 large chains and 8 small chains. Requires Mg(2+) as cofactor.

It localises to the plastid. It is found in the chloroplast. The enzyme catalyses 2 (2R)-3-phosphoglycerate + 2 H(+) = D-ribulose 1,5-bisphosphate + CO2 + H2O. It catalyses the reaction D-ribulose 1,5-bisphosphate + O2 = 2-phosphoglycolate + (2R)-3-phosphoglycerate + 2 H(+). In terms of biological role, ruBisCO catalyzes two reactions: the carboxylation of D-ribulose 1,5-bisphosphate, the primary event in carbon dioxide fixation, as well as the oxidative fragmentation of the pentose substrate in the photorespiration process. Both reactions occur simultaneously and in competition at the same active site. The protein is Ribulose bisphosphate carboxylase large chain of Porphyridium aerugineum (Red microalga).